The following is a 278-amino-acid chain: Type II restriction enzyme NgoPII (278 aa).

Belongs to the NgoPII type II restriction endonuclease family.

It catalyses the reaction Endonucleolytic cleavage of DNA to give specific double-stranded fragments with terminal 5'-phosphates.. A P subtype restriction enzyme that recognizes the double-stranded sequence 5'-GGCC-3' and cleaves after G-2. The polypeptide is Type II restriction enzyme NgoPII (ngoPIIR) (Neisseria gonorrhoeae).